Here is a 391-residue protein sequence, read N- to C-terminus: uncharacterized protein (391 aa).

It belongs to the mycobacterial PPE family.

This is an uncharacterized protein from Mycobacterium tuberculosis (strain CDC 1551 / Oshkosh).